We begin with the raw amino-acid sequence, 550 residues long: MSYRDNEYSGNYNGKEDGYNSRGRYGGGYRNNYSRGGGRGGFNDGASYGYDQRGQGRNFYESDGPGANLVKKDWKNETLIPFQKDFYKEHENVRNRSDAEVTEYRKEKEIVVHGLNVPKPVTTFEEAGFPNYVLKEVKQLGFEAPTPIQQQAWPMAMSGRDMVGISATGSGKTLSYCLPAIVHINAQPLLSPGDGPIVLVLAPTRELAVQIQQECTKFGKSSRIRNTCVYGGVPRGPQIRDLIRGVEICIATPGRLLDMLDSNKTNLRRVTYLVLDEADRMLDMGFEPQIRKIVDQIRPDRQTVMFSATWPKEVQRLARDYLNDYIQVTVGSLDLAASHNIKQIVEVVDNADKRARLGKDIEEVLKDRDNKVLIFTGTKRVADDITRFLRQDGWPALAIHGDKAQDERDWVLNEFRTGKSPIMVATDVASRGIDVKGITHVFNYDFPGNTEDYVHRIGRTGRAGAKGTAYTYFTSDNAKQARELVSILSEAKQDIDPKLEEMARYSSGGRGGNYRRGGYGRGGFRRGGGYGNRNRGFTGSNSAPLARSRW.

The interval 1 to 25 (MSYRDNEYSGNYNGKEDGYNSRGRY) is disordered. The Q motif signature appears at 122–150 (TTFEEAGFPNYVLKEVKQLGFEAPTPIQQ). In terms of domain architecture, Helicase ATP-binding spans 153–328 (WPMAMSGRDM…RDYLNDYIQV (176 aa)). 166-173 (SATGSGKT) contacts ATP. A DEAD box motif is present at residues 276–279 (DEAD). The 164-residue stretch at 340–503 (NIKQIVEVVD…DIDPKLEEMA (164 aa)) folds into the Helicase C-terminal domain. The RNA-binding RGG-box stretch occupies residues 510–533 (RGGNYRRGGYGRGGFRRGGGYGNR). Residues 525 to 550 (RRGGGYGNRNRGFTGSNSAPLARSRW) form a disordered region.

The protein belongs to the DEAD box helicase family. DDX5/DBP2 subfamily. In terms of assembly, associates with polysomes.

The protein localises to the cytoplasm. It is found in the nucleus. It carries out the reaction ATP + H2O = ADP + phosphate + H(+). ATP-dependent RNA helicase involved nonsense-mediated mRNA decay and ribosome biogenesis through rRNA processing. The chain is ATP-dependent RNA helicase dbp2 (dbp2) from Schizosaccharomyces pombe (strain 972 / ATCC 24843) (Fission yeast).